The sequence spans 79 residues: MDVQQFFVVAVFFLIPIFCFREAWKGWRAGAIDKRVKNAPEPVYVWRAKNPGLFFAYMVAYIGFGILSIGMIVYLIFYR.

A helical membrane pass occupies residues 53–73 (LFFAYMVAYIGFGILSIGMIV).

The protein localises to the membrane. This is an uncharacterized protein from Escherichia coli O157:H7.